We begin with the raw amino-acid sequence, 445 residues long: MARKYFGTDGIRGRVGQFPITPDFMLKLGWAAGMAFRKEGKCRILIGKDTRISGYMFESALEAGLAAAGADVQLLGPMPTPAIAYLTRTFQADAGIVISASHNPHDDNGIKFFSNEGTKLPDDVEAMIEELLDQPMTVVESAGIGKASRINDASGRYIEFCKGSVPSGTSFKGLKIVIDCAHGAAYKVAPSVFRELGAEVRVISAQPDGLNINDGCGSTHIAALQAEVVAQQADLGIAFDGDADRVLMVDQYGAVVDGDELLFIIARDLQERGRLRGGVVGTLMSNLGLELALAELNIPFVRAKVGDRYVIAELLARNWQLGGENSGHLVCFQHTTTGDAIIAALQVLMALKRRGQSLVEARSDLKKCPQVLVNVRLSGAVDPLEHPSVKEACARVTERMAGRGRVLLRKSGTEPLVRVMVEGDEESSVRGYADELAKIVAEVCA.

The active-site Phosphoserine intermediate is the Ser-101. 4 residues coordinate Mg(2+): Ser-101, Asp-240, Asp-242, and Asp-244. Residue Ser-101 is modified to Phosphoserine.

Belongs to the phosphohexose mutase family. Mg(2+) serves as cofactor. In terms of processing, activated by phosphorylation.

It catalyses the reaction alpha-D-glucosamine 1-phosphate = D-glucosamine 6-phosphate. Functionally, catalyzes the conversion of glucosamine-6-phosphate to glucosamine-1-phosphate. The protein is Phosphoglucosamine mutase of Ectopseudomonas mendocina (strain ymp) (Pseudomonas mendocina).